The chain runs to 438 residues: Protein DAY-LENGTH-DEPENDENT DELAYED-GREENING 1, chloroplastic (438 aa).

The N-terminal 54 residues, 1-54 (MSLMSSSMVLCHCLSFSSQNPDPESSSSSLLRYKPCDSISLWGKRRKKLWRFVP), are a transit peptide targeting the chloroplast. A run of 4 helical transmembrane segments spans residues 216–236 (FLAVLILIPWALDFLAHDYLL), 314–334 (AFANIWSDMVFGISLFVLLYA), 359–379 (AFLIILITDIFLGYHSESGWE), and 398–418 (ITIFICLVPVIMDACVKLWLF).

It belongs to the CemA family.

The protein localises to the plastid. It localises to the chloroplast envelope. Its subcellular location is the chloroplast membrane. It catalyses the reaction K(+)(in) + H(+)(out) = K(+)(out) + H(+)(in). The catalysed reaction is Ca(2+)(in) + H(+)(out) = Ca(2+)(out) + H(+)(in). Its function is as follows. Promotes K(+)/H(+) antiport activity supporting K(+) efflux to control H(+) homeostasis in chloroplasts. Also able to ensure Ca(2+)/H(+) antiport activity in vitro. Essential for chloroplast pH regulation and optimization of non-photochemical quenching (NPQ), a regulatory mechanism that dissipates excess light energy; acts downstream of PSBS but independently from PGR5 and FLAP1. This chain is Protein DAY-LENGTH-DEPENDENT DELAYED-GREENING 1, chloroplastic, found in Arabidopsis thaliana (Mouse-ear cress).